Here is a 752-residue protein sequence, read N- to C-terminus: MVVGTKKYSNLDFVPTISDSEDDVPILDSSDDEKVEAKKTTKKRKGKNNKKKVSEGDNLDEDVHEDLDAGFKFDLDADDTTSNFQGWNFLAEGESNKDDAEAFVKKDVDLDKIIRRKGGLVKMAHIDSKQEEETEKEKVEKENDSDDEELAMDGFGMGAPMNNGDENQSEEEEEEEEKEEEEEEEEEQEEMTLEKGGKDDEIDEEDDSEEAKADFYAPETEGDEAKKQMYENFNSLSLSRPVLKGLASLGYVKPSPIQSATIPIALLGKDIIAGAVTGSGKTAAFMIPIIERLLYKPAKIASTRVIVLLPTRELAIQVADVGKQIARFVSGITFGLAVGGLNLRQQEQMLKSRPDIVIATPGRFIDHIRNSASFNVDSVEILVMDEADRMLEEGFQDELNEIMGLLPSNRQNLLFSATMNSKIKSLVSLSLKKPVRIMIDPPKKAATKLTQEFVRIRKRDHLKPALLFNLIRKLDPTGQKRIVVFVARKETAHRLRIIMGLLGMSVGELHGSLTQEQRLDSVNKFKNLEVPVLICTDLASRGLDIPKIEVVINYDMPKSYEIYLHRVGRTARAGREGRSVTFVGESSQDRSIVRAAIKSVEENKSLTQGKALGRNVDWVQIEETNKLVESMNDTIEDILVEEKEEKEILRAEMQLRKGENMLKHKKEIQARPRRTWFQSESDKKNSKVLGALSRNKKVTNSKKRKREEAKADGNGARSYRKTKTDRIADQERTFKKQKSTNSNKKKGFKSRR.

Disordered stretches follow at residues 1 to 61 and 119 to 223; these read MVVG…NLDE and GLVK…TEGD. Positions 19–34 are enriched in acidic residues; that stretch reads DSEDDVPILDSSDDEK. Residues 40-51 are compositionally biased toward basic residues; the sequence is TTKKRKGKNNKK. The segment covering 124–142 has biased composition (basic and acidic residues); that stretch reads AHIDSKQEEETEKEKVEKE. Acidic residues-rich tracts occupy residues 167-191 and 200-209; these read NQSE…QEEM and DEIDEEDDSE. Ser208 is modified (phosphoserine). A Q motif motif is present at residues 231 to 259; the sequence is ENFNSLSLSRPVLKGLASLGYVKPSPIQS. Residues 262–437 form the Helicase ATP-binding domain; sequence IPIALLGKDI…SLSLKKPVRI (176 aa). 275-282 serves as a coordination point for ATP; that stretch reads AVTGSGKT. Positions 385–388 match the DEAD box motif; that stretch reads DEAD. The region spanning 448–639 is the Helicase C-terminal domain; it reads KLTQEFVRIR…SMNDTIEDIL (192 aa). Residues 621 to 667 adopt a coiled-coil conformation; it reads IEETNKLVESMNDTIEDILVEEKEEKEILRAEMQLRKGENMLKHKKE. The segment at 673–752 is disordered; it reads RRTWFQSESD…NKKKGFKSRR (80 aa). The segment covering 694-705 has biased composition (basic residues); sequence RNKKVTNSKKRK. Positions 722–734 are enriched in basic and acidic residues; that stretch reads TKTDRIADQERTF. Residues 735–752 show a composition bias toward basic residues; sequence KKQKSTNSNKKKGFKSRR.

The protein belongs to the DEAD box helicase family. DDX27/DRS1 subfamily. As to quaternary structure, interacts with RRP1 and associates with pre-ribosomal particles.

The protein localises to the nucleus. Its subcellular location is the nucleolus. It catalyses the reaction ATP + H2O = ADP + phosphate + H(+). ATP-binding RNA helicase involved in ribosome assembly. This chain is ATP-dependent RNA helicase DRS1 (DRS1), found in Saccharomyces cerevisiae (strain ATCC 204508 / S288c) (Baker's yeast).